A 756-amino-acid chain; its full sequence is 1-phosphatidylinositol 4,5-bisphosphate phosphodiesterase delta-1 (756 aa).

In terms of domain architecture, PH spans 21–130 (ALLKGSQLLK…WVQGLRKIIH (110 aa)). Positions 30 to 57 (KVKSSSWRRERFYKLQEDCKTIWQESRK) are substrate binding. EF-hand domains are found at residues 140-175 (KLQH…LNIQ) and 176-211 (VDDG…LTQR). 10 residues coordinate Ca(2+): Asp-153, Asn-155, Asp-157, Lys-159, Glu-164, Asp-189, Ser-191, Thr-193, Ser-195, and Glu-200. Ser-191 is a glycosylation site (O-linked (GlcNAc) serine). Thr-193 carries O-linked (GlcNAc) threonine glycosylation. A PI-PLC X-box domain is found at 296 to 440 (QDMDQPLSHY…LKGKILLKGK (145 aa)). Residue His-311 is part of the active site. Residues Asn-312, Glu-341, and Asp-343 each contribute to the Ca(2+) site. Residue His-356 is part of the active site. Residue Glu-390 participates in Ca(2+) binding. Positions 438 and 440 each coordinate substrate. Thr-457 is subject to Phosphothreonine. Ser-460 carries the phosphoserine modification. One can recognise a PI-PLC Y-box domain in the interval 492 to 609 (LSDMIIYCKS…GYVLKPAFLR (118 aa)). The substrate site is built by Ser-522 and Arg-549. A C2 domain is found at 609 to 737 (RDPNTTFNSR…QGYRHVHLLS (129 aa)). Ca(2+) is bound by residues Ile-651, Asp-653, Asn-677, Asp-706, Tyr-707, and Asp-708.

As to quaternary structure, interacts with TGM2. The cofactor is Ca(2+).

The catalysed reaction is a 1,2-diacyl-sn-glycero-3-phospho-(1D-myo-inositol-4,5-bisphosphate) + H2O = 1D-myo-inositol 1,4,5-trisphosphate + a 1,2-diacyl-sn-glycerol + H(+). It catalyses the reaction a 1,2-diacyl-sn-glycero-3-phospho-(1D-myo-inositol) + H2O = 1D-myo-inositol 1-phosphate + a 1,2-diacyl-sn-glycerol + H(+). The production of the second messenger molecules diacylglycerol (DAG) and inositol 1,4,5-trisphosphate (IP3) is mediated by activated phosphatidylinositol-specific phospholipase C enzymes. Essential for trophoblast and placental development. Binds phosphatidylinositol 4,5-bisphosphate. This Rattus norvegicus (Rat) protein is 1-phosphatidylinositol 4,5-bisphosphate phosphodiesterase delta-1.